A 172-amino-acid chain; its full sequence is Bifunctional protein PyrR (172 aa).

Residues 93–105 carry the PRPP-binding motif; the sequence is VILIDDVLYTGRT.

This sequence belongs to the purine/pyrimidine phosphoribosyltransferase family. PyrR subfamily. Homodimer and homohexamer; in equilibrium.

It catalyses the reaction UMP + diphosphate = 5-phospho-alpha-D-ribose 1-diphosphate + uracil. In terms of biological role, regulates transcriptional attenuation of the pyrimidine nucleotide (pyr) operon by binding in a uridine-dependent manner to specific sites on pyr mRNA. This disrupts an antiterminator hairpin in the RNA and favors formation of a downstream transcription terminator, leading to a reduced expression of downstream genes. Also displays a weak uracil phosphoribosyltransferase activity which is not physiologically significant. The chain is Bifunctional protein PyrR from Streptococcus sanguinis (strain SK36).